Reading from the N-terminus, the 308-residue chain is MTEITAALVKELREKSGAGMMDCKKALIETNGDIEAAIDWLRAKGISKADKKSGRTAAEGLVAIAGAGHKAVVVELNSETDFVARNDAFQELVRGIAEVALSTDGTVEAISAATYPASGKPVADTIKDAIATIGENMTLRRAAKLEVEHGVVATYIHNAAGDGIGKLGVLVALKSVGDKAVLTSIGRQVAMHIAATNPLAIRAEEVDAAVAERERNVFIEQSRESGKPEAIIEKMVEGRMRKFFEEVALLSQAFVINPDLTVGAAIKEAEKTAGAAIEVVGMARLLLGEGVEKEEADFAAEVAAVAKG.

The segment at 80-83 (TDFV) is involved in Mg(2+) ion dislocation from EF-Tu.

Belongs to the EF-Ts family.

Its subcellular location is the cytoplasm. In terms of biological role, associates with the EF-Tu.GDP complex and induces the exchange of GDP to GTP. It remains bound to the aminoacyl-tRNA.EF-Tu.GTP complex up to the GTP hydrolysis stage on the ribosome. This chain is Elongation factor Ts, found in Rhizobium rhizogenes (strain K84 / ATCC BAA-868) (Agrobacterium radiobacter).